Consider the following 557-residue polypeptide: 2-succinyl-5-enolpyruvyl-6-hydroxy-3-cyclohexene-1-carboxylate synthase (557 aa).

This sequence belongs to the TPP enzyme family. MenD subfamily. Homodimer. Mg(2+) serves as cofactor. It depends on Mn(2+) as a cofactor. Thiamine diphosphate is required as a cofactor.

It carries out the reaction isochorismate + 2-oxoglutarate + H(+) = 5-enolpyruvoyl-6-hydroxy-2-succinyl-cyclohex-3-ene-1-carboxylate + CO2. It participates in quinol/quinone metabolism; 1,4-dihydroxy-2-naphthoate biosynthesis; 1,4-dihydroxy-2-naphthoate from chorismate: step 2/7. The protein operates within quinol/quinone metabolism; menaquinone biosynthesis. Catalyzes the thiamine diphosphate-dependent decarboxylation of 2-oxoglutarate and the subsequent addition of the resulting succinic semialdehyde-thiamine pyrophosphate anion to isochorismate to yield 2-succinyl-5-enolpyruvyl-6-hydroxy-3-cyclohexene-1-carboxylate (SEPHCHC). The chain is 2-succinyl-5-enolpyruvyl-6-hydroxy-3-cyclohexene-1-carboxylate synthase from Staphylococcus aureus (strain USA300).